Consider the following 546-residue polypeptide: Medium-chain-fatty-acid--CoA ligase (546 aa).

Position 185 (T185) interacts with Mg(2+). W235 and T329 together coordinate ATP. Position 330 (E330) interacts with Mg(2+). 4 residues coordinate ATP: D417, K434, K438, and W443.

Belongs to the ATP-dependent AMP-binding enzyme family.

The protein resides in the cytoplasm. The catalysed reaction is a medium-chain fatty acid + ATP + CoA = a medium-chain fatty acyl-CoA + AMP + diphosphate. It participates in lipid metabolism; fatty acid metabolism. The polypeptide is Medium-chain-fatty-acid--CoA ligase (Ectopseudomonas oleovorans (Pseudomonas oleovorans)).